The sequence spans 250 residues: Probable transcriptional regulatory protein SACE_2018 (250 aa).

Belongs to the TACO1 family.

The protein resides in the cytoplasm. The sequence is that of Probable transcriptional regulatory protein SACE_2018 from Saccharopolyspora erythraea (strain ATCC 11635 / DSM 40517 / JCM 4748 / NBRC 13426 / NCIMB 8594 / NRRL 2338).